A 535-amino-acid polypeptide reads, in one-letter code: Thermosome subunit gamma (535 aa).

Belongs to the TCP-1 chaperonin family. In terms of assembly, forms a heterooligomeric complex of two stacked nine-membered rings; one of alpha and the other of beta subunits.

It localises to the cytoplasm. The enzyme catalyses ATP + H2O = ADP + phosphate + H(+). Its function is as follows. Molecular chaperone; binds unfolded polypeptides in vitro, and has a weak ATPase activity. In Saccharolobus shibatae (strain ATCC 51178 / DSM 5389 / JCM 8931 / NBRC 15437 / B12) (Sulfolobus shibatae), this protein is Thermosome subunit gamma (thsC).